A 118-amino-acid chain; its full sequence is Vitelline coat lysin (118 aa).

The polypeptide is Vitelline coat lysin (Tegula pfeifferi (Pfeiffer's top shell)).